A 172-amino-acid chain; its full sequence is 3-hydroxydecanoyl-[acyl-carrier-protein] dehydratase (172 aa).

Residue His-71 is part of the active site.

It belongs to the thioester dehydratase family. FabA subfamily. Homodimer.

Its subcellular location is the cytoplasm. The enzyme catalyses a (3R)-hydroxyacyl-[ACP] = a (2E)-enoyl-[ACP] + H2O. It catalyses the reaction (3R)-hydroxydecanoyl-[ACP] = (2E)-decenoyl-[ACP] + H2O. It carries out the reaction (2E)-decenoyl-[ACP] = (3Z)-decenoyl-[ACP]. Its pathway is lipid metabolism; fatty acid biosynthesis. Necessary for the introduction of cis unsaturation into fatty acids. Catalyzes the dehydration of (3R)-3-hydroxydecanoyl-ACP to E-(2)-decenoyl-ACP and then its isomerization to Z-(3)-decenoyl-ACP. Can catalyze the dehydratase reaction for beta-hydroxyacyl-ACPs with saturated chain lengths up to 16:0, being most active on intermediate chain length. The protein is 3-hydroxydecanoyl-[acyl-carrier-protein] dehydratase of Brucella abortus (strain S19).